A 102-amino-acid chain; its full sequence is ATP-dependent Clp protease adapter protein ClpS (102 aa).

It belongs to the ClpS family. As to quaternary structure, binds to the N-terminal domain of the chaperone ClpA.

Its function is as follows. Involved in the modulation of the specificity of the ClpAP-mediated ATP-dependent protein degradation. This chain is ATP-dependent Clp protease adapter protein ClpS, found in Desulfotalea psychrophila (strain LSv54 / DSM 12343).